Consider the following 121-residue polypeptide: RING-box protein HRT1 (121 aa).

The disordered stretch occupies residues 1–31 (MSNEVDRMDVDEDESQNIAQSSNQSAPVETK). Serine 15 carries the phosphoserine modification. A compositionally biased stretch (low complexity) spans 16 to 26 (QNIAQSSNQSA). Cysteine 55, cysteine 58, cysteine 66, cysteine 69, cysteine 81, cysteine 88, histidine 90, histidine 93, histidine 95, cysteine 107, and aspartate 110 together coordinate Zn(2+). The segment at 55 to 111 (CAICRNHIMEPCIECQPKAMTDTDNECVAAWGVCNHAFHLHCINKWIKTRDACPLDN) adopts an RING-type zinc-finger fold.

This sequence belongs to the RING-box family. In terms of assembly, component of multiple cullin-RING ligases (CRLs) composed of 4 subunits: the RING protein HRT1, a cullin, a linker protein, and one of many alternative substrate receptors. Component of SCF E3 ubiquitin ligase complexes containing the cullin CDC53, the linker protein SKP1/CBF3D, and substrate receptors containing F-box motifs like DAS1 or GRR1. Component of RTT101(MMS1) E3 ubiquitin ligase complexes containing the cullin RTT101, the linker protein MMS1, and substrate receptors belonging to a protein family described as DCAF (DDB1- and CUL4-associated factor) like MMS22. Component of CRL3 E3 ubiquitin ligase complexes containing the cullin CUL3, the linker protein ELC1, and substrate receptors containing SOCS-box motifs like ELA1. Interacts with CDC53, CUL3, RTT101, CDC4 and CDC34/UBC3.

The protein resides in the cytoplasm. It localises to the nucleus. The protein operates within protein modification; protein ubiquitination. Its function is as follows. Core component of multiple cullin-RING-based E3 ubiquitin-protein ligase complexes (CRLs), which mediate the ubiquitination of target proteins. Recruits the E2 ubiquitin-conjugating enzyme CDC34/UBC3 to the complex and brings it into close proximity to the substrate. Also stimulates CDC34/UBC3 autoubiquitination and promotes the neddylation of CDC53 and RTT101. Component of the SCF(CDC4) ubiquitin ligase required for ubiquitination of the cyclin-dependent kinase inhibitor SIC1 and for the G1-to-S phase transition. Component of the RTT101(MMS1-MMS22) ubiquitin ligase that promotes fork progression through damaged DNA or natural pause sites. Component of the CRL3(ELA1) ubiquitin ligase required for ubiquitination of RPB1, the largest subunit of RNA polymerase II (Pol II), which targets Pol II for proteasomal degradation in DNA-damaged cells. The protein is RING-box protein HRT1 (HRT1) of Saccharomyces cerevisiae (strain ATCC 204508 / S288c) (Baker's yeast).